Reading from the N-terminus, the 768-residue chain is Kelch domain-containing protein 7A (768 aa).

Residues 12–29 form a helical membrane-spanning segment; it reads VVLSAAALLLVTVAYRLY. Residues 35-210 form a disordered region; it reads PAQRWGGNAQ…PAPLQGSSDM (176 aa). Ser-77 carries the phosphoserine modification. Residues 104–118 show a composition bias toward basic and acidic residues; that stretch reads TDRKSQRKGSGEERG. N-linked (GlcNAc...) asparagine glycosylation is present at Asn-248. A disordered region spans residues 304-352; it reads LTEVPSPRPPPRSLGTGAASGGQAGDTKGAAERAASPQPGPSPSTRGFS. The Kelch 1 repeat unit spans residues 319 to 365; that stretch reads TGAASGGQAGDTKGAAERAASPQPGPSPSTRGFSRKESLLQIAENPE. Ser-356 bears the Phosphoserine mark. Residues 371 to 395 are disordered; it reads DGFWLPAPPCPDPGALPGSGRSSQE. Kelch repeat units follow at residues 483–529, 532–580, 581–623, and 626–668; these read QYLV…ICSL, YLFV…ALDG, HLYA…ATAC, and EIFV…AVNG.

Its subcellular location is the membrane. This chain is Kelch domain-containing protein 7A (KLHDC7A), found in Pongo abelii (Sumatran orangutan).